The primary structure comprises 193 residues: Ribonuclease HII (193 aa).

Positions 15 to 193 constitute an RNase H type-2 domain; it reads YIVAGIDEAG…PYHRKSFKCC (179 aa). 3 residues coordinate a divalent metal cation: aspartate 21, glutamate 22, and aspartate 112.

The protein belongs to the RNase HII family. The cofactor is Mn(2+). Mg(2+) serves as cofactor.

It is found in the cytoplasm. It catalyses the reaction Endonucleolytic cleavage to 5'-phosphomonoester.. Endonuclease that specifically degrades the RNA of RNA-DNA hybrids. This chain is Ribonuclease HII, found in Rickettsia akari (strain Hartford).